The primary structure comprises 268 residues: MICOS complex subunit MIC27 (268 aa).

A mitochondrion-targeting transit peptide spans 1 to 27 (MAAIRMGKLTTMPAGLIYASVSVHAAK). At 28 to 110 (QEESKKQLVK…YVYLKNPPRD (83 aa)) the chain is on the mitochondrial intermembrane side. The helical transmembrane segment at 111-129 (FLPKMGVITVSGLAGLVSA) threads the bilayer. At 130–137 (RKGSKFKK) the chain is on the mitochondrial matrix side. A helical membrane pass occupies residues 138–155 (ITYPLGLATLGATVCYPV). At 156–268 (QSVIIAKVTA…EDIDMYSTRS (113 aa)) the chain is on the mitochondrial intermembrane side. Positions 187-200 (SKEESLPKPKEKTK) are enriched in basic and acidic residues. A disordered region spans residues 187–268 (SKEESLPKPK…EDIDMYSTRS (82 aa)). Position 204 is a phosphoserine (Ser204). Basic and acidic residues predominate over residues 249 to 260 (KLMDHGQSHPED).

This sequence belongs to the apolipoprotein O/MICOS complex subunit Mic27 family. In terms of assembly, component of the mitochondrial contact site and cristae organizing system (MICOS) complex, composed of at least MICOS10/MIC10, CHCHD3/MIC19, CHCHD6/MIC25, APOOL/MIC27, IMMT/MIC60, APOO/MIC23/MIC26 and MICOS13/MIC13. This complex was also known under the names MINOS or MitOS complex. The MICOS complex associates with mitochondrial outer membrane proteins SAMM50, MTX1 and MTX2 (together described as components of the mitochondrial outer membrane sorting assembly machinery (SAM) complex) and DNAJC11, mitochondrial inner membrane protein TMEM11 and with HSPA9. The MICOS and SAM complexes together with DNAJC11 are part of a large protein complex spanning both membranes termed the mitochondrial intermembrane space bridging (MIB) complex. Interacts with MICOS10/MIC10, IMMT/MIC60 and APOO/MIC23/MIC26.

The protein resides in the mitochondrion inner membrane. The protein localises to the mitochondrion. In terms of biological role, component of the MICOS complex, a large protein complex of the mitochondrial inner membrane that plays crucial roles in the maintenance of crista junctions, inner membrane architecture, and formation of contact sites to the outer membrane. Specifically binds to cardiolipin (in vitro) but not to the precursor lipid phosphatidylglycerol. Plays a crucial role in crista junction formation and mitochondrial function,. This Homo sapiens (Human) protein is MICOS complex subunit MIC27 (APOOL).